A 191-amino-acid chain; its full sequence is Ribosome maturation factor RimP (191 aa).

It belongs to the RimP family.

The protein resides in the cytoplasm. Its function is as follows. Required for maturation of 30S ribosomal subunits. The protein is Ribosome maturation factor RimP of Caulobacter vibrioides (strain NA1000 / CB15N) (Caulobacter crescentus).